The chain runs to 423 residues: Zinc finger protein Gfi-1 (423 aa).

Residues 1 to 20 (MPRSFLVKSKKAHSYHQPRS) form an SNAG domain region. A disordered region spans residues 1–102 (MPRSFLVKSK…PPSPSVSPAS (102 aa)). Phosphoserine occurs at positions 20 and 57. The segment covering 48 to 57 (SKMEPRERLS) has biased composition (basic and acidic residues). Residues 141 to 258 (RQCSALERSA…LLLGGGSYKC (118 aa)) form a required for interaction with RELA region. 6 consecutive C2H2-type zinc fingers follow at residues 256-279 (YKCI…RRSH), 285-307 (FACE…KAVH), 313-335 (FDCK…LLIH), 341-363 (YPCQ…TFIH), 369-391 (HKCQ…SRKH), and 397-420 (FGCD…ETQH).

In terms of assembly, interacts with U2AF1L4. Component of RCOR-GFI-KDM1A-HDAC complexes. Interacts directly with RCOR1, KDM1A and HDAC2. Also interacts with HDAC1. regions. Interacts (via the zinc-finger domain) with ARIH2; the interaction prevents GFI1 ubiquitination and proteasomal degradation. Interacts with PIAS3; the interaction relieves the inhibitory effect of PIAS3 on STAT3-mediated transcriptional activity. Forms a complex with EHMT2 and HDAC1 to promote 'Lys-9' dimethylation of H3 (H3K9Me2) and repress expression of target genes. Interacts directly with EHMT2. Component of the GFI1-AJUBA-HDAC1 repressor complex. Interacts directly with AJUBA (via ITS LIM domains); the interaction results in the HDAC-dependent corepression of a subset of GFI1 target genes and, occurs independent of the SNAG domain. Interacts with SPI1; the interaction inhibits SPI1 transcriptional activity targeted at macrophage-specific genes, repressing macrophage differentiation of myeloid progenitor cells and promoting granulocyte commitment. Interacts with RUNX1T1; the interaction represses HDAC-mediated transcriptional activity. Interacts with RELA; the interaction occurs on liposaccharide (LPS) stimulation controls RELA DNA binding activity and regulates endotoxin-mediated TOLL-like receptor inflammatory response. Interacts (via the C-terminal zinc fingers) with ZBTB17; the interaction results in the recruitment of GFI1 to the CDKN1A/p21 promoter and repression of CDKN1A/p21 transcription. Ubiquitinated. As to expression, restricted to lymphoid tissues and testes in adult animals.

Its subcellular location is the nucleus. Transcription repressor essential for hematopoiesis. Functions in a cell-context and development-specific manner. Binds to 5'-TAAATCAC[AT]GCA-3' in the promoter region of a large number of genes. Component of several complexes, including the EHMT2-GFI1-HDAC1, AJUBA-GFI1-HDAC1 and RCOR-GFI-KDM1A-HDAC complexes, that suppress, via histone deacetylase (HDAC) recruitment, a number of genes implicated in multilineage blood cell development. Regulates neutrophil differentiation, promotes proliferation of lymphoid cells, and is required for granulocyte development. Inhibits SPI1 transcriptional activity at macrophage-specific genes, repressing macrophage differentiation of myeloid progenitor cells and promoting granulocyte commitment. Mediates, together with U2AF1L4, the alternative splicing of CD45 and controls T-cell receptor signaling. Regulates the endotoxin-mediated Toll-like receptor (TLR) inflammatory response by antagonizing RELA. Cooperates with CBFA2T2 to regulate ITGB1-dependent neurite growth. Controls cell-cycle progression by repressing CDKNIA/p21 transcription in response to TGFB1 via recruitment of GFI1 by ZBTB17 to the CDKNIA/p21 and CDKNIB promoters. Required for the maintenance of inner ear hair cells. In addition to its role in transcription, acts as a substrate adapter for PRMT1 in the DNA damage response: facilitates the recognition of TP53BP1 and MRE11 substrates by PRMT1, promoting their methylation and the DNA damage response. The polypeptide is Zinc finger protein Gfi-1 (Gfi1) (Rattus norvegicus (Rat)).